The primary structure comprises 102 residues: Iron-sulfur cluster assembly protein CyaY (102 aa).

The protein belongs to the frataxin family.

Involved in iron-sulfur (Fe-S) cluster assembly. May act as a regulator of Fe-S biogenesis. In Histophilus somni (strain 2336) (Haemophilus somnus), this protein is Iron-sulfur cluster assembly protein CyaY.